The primary structure comprises 583 residues: Phosphoglucomutase, cytoplasmic 1 (583 aa).

Alpha-D-glucose 1,6-bisphosphate contacts are provided by Arg-25 and Ser-124. Catalysis depends on Ser-124, which acts as the Phosphoserine intermediate. 4 residues coordinate Mg(2+): Ser-124, Asp-300, Asp-302, and Asp-304. Position 124 is a phosphoserine (Ser-124). Positions 304, 305, 368, 387, 389, and 400 each coordinate alpha-D-glucose 1,6-bisphosphate.

It belongs to the phosphohexose mutase family. Monomer. The cofactor is Mg(2+). In terms of processing, autophosphorylated. As to expression, mostly expressed in roots and coleoptiles, and, to a lower extent, in leaves, pollen and developing seeds.

The protein localises to the cytoplasm. It carries out the reaction alpha-D-glucose 1-phosphate = alpha-D-glucose 6-phosphate. It catalyses the reaction O-phospho-L-seryl-[protein] + alpha-D-glucose 1-phosphate = alpha-D-glucose 1,6-bisphosphate + L-seryl-[protein]. The catalysed reaction is alpha-D-glucose 1,6-bisphosphate + L-seryl-[protein] = O-phospho-L-seryl-[protein] + alpha-D-glucose 6-phosphate. In terms of biological role, catalyzes the reversible isomerization of alpha-D-glucose 1-phosphate to alpha-D-glucose 6-phosphate. The mechanism proceeds via the intermediate compound alpha-D-glucose 1,6-bisphosphate. This enzyme participates in both the breakdown and synthesis of glucose. In Zea mays (Maize), this protein is Phosphoglucomutase, cytoplasmic 1.